A 122-amino-acid chain; its full sequence is Large ribosomal subunit protein uL14 (122 aa).

It belongs to the universal ribosomal protein uL14 family. As to quaternary structure, part of the 50S ribosomal subunit. Forms a cluster with proteins L3 and L19. In the 70S ribosome, L14 and L19 interact and together make contacts with the 16S rRNA in bridges B5 and B8.

In terms of biological role, binds to 23S rRNA. Forms part of two intersubunit bridges in the 70S ribosome. The chain is Large ribosomal subunit protein uL14 from Methylibium petroleiphilum (strain ATCC BAA-1232 / LMG 22953 / PM1).